Here is a 322-residue protein sequence, read N- to C-terminus: MTASPSKLAQLRELSVVVADTGDYDAIKRLQPVDCTTNPTLVKKALDLPVYADLLERELTWGRAHGGDDRTTTVDEVADRLTIGVGVKLSALVPGRVSTEVDADLAHDTQATIAKARKFVAMYAERGVPKDKILIKIAATWEGIEAARQLQLEGIDCNLTLIFNRAQALACAEANVFLISPFVGRILDYYVAQGQTPASIDEDPGVVFVRTVYNAFKQRGSSTVVMGASFRSTAQIEALAGCDRLTISPDLLEKLDAEHGELPRKLSPGNANNAQITPIDSDSFASGLAADPMATEKLASGIDTFAKDLHALRKTIADKLAG.

Lys136 (schiff-base intermediate with substrate) is an active-site residue.

It belongs to the transaldolase family. Type 1 subfamily. In terms of assembly, homodimer.

The protein localises to the cytoplasm. The enzyme catalyses D-sedoheptulose 7-phosphate + D-glyceraldehyde 3-phosphate = D-erythrose 4-phosphate + beta-D-fructose 6-phosphate. Its pathway is carbohydrate degradation; pentose phosphate pathway; D-glyceraldehyde 3-phosphate and beta-D-fructose 6-phosphate from D-ribose 5-phosphate and D-xylulose 5-phosphate (non-oxidative stage): step 2/3. Functionally, transaldolase is important for the balance of metabolites in the pentose-phosphate pathway. This Xanthomonas oryzae pv. oryzae (strain KACC10331 / KXO85) protein is Transaldolase.